We begin with the raw amino-acid sequence, 264 residues long: 3-methyl-2-oxobutanoate hydroxymethyltransferase (264 aa).

Mg(2+)-binding residues include Asp-45 and Asp-84. Residues 45 to 46 (DS), Asp-84, and Lys-112 each bind 3-methyl-2-oxobutanoate. Glu-114 provides a ligand contact to Mg(2+). Glu-181 serves as the catalytic Proton acceptor.

It belongs to the PanB family. Homodecamer; pentamer of dimers. Requires Mg(2+) as cofactor.

Its subcellular location is the cytoplasm. It catalyses the reaction 3-methyl-2-oxobutanoate + (6R)-5,10-methylene-5,6,7,8-tetrahydrofolate + H2O = 2-dehydropantoate + (6S)-5,6,7,8-tetrahydrofolate. It functions in the pathway cofactor biosynthesis; (R)-pantothenate biosynthesis; (R)-pantoate from 3-methyl-2-oxobutanoate: step 1/2. Its function is as follows. Catalyzes the reversible reaction in which hydroxymethyl group from 5,10-methylenetetrahydrofolate is transferred onto alpha-ketoisovalerate to form ketopantoate. This is 3-methyl-2-oxobutanoate hydroxymethyltransferase from Escherichia coli O8 (strain IAI1).